The primary structure comprises 106 residues: Iron-sulfur cluster assembly protein CyaY (106 aa).

This sequence belongs to the frataxin family.

Its function is as follows. Involved in iron-sulfur (Fe-S) cluster assembly. May act as a regulator of Fe-S biogenesis. The sequence is that of Iron-sulfur cluster assembly protein CyaY from Cronobacter sakazakii (strain ATCC BAA-894) (Enterobacter sakazakii).